The following is a 435-amino-acid chain: Glutamate-1-semialdehyde 2,1-aminomutase (435 aa).

K269 bears the N6-(pyridoxal phosphate)lysine mark.

This sequence belongs to the class-III pyridoxal-phosphate-dependent aminotransferase family. HemL subfamily. In terms of assembly, homodimer. Requires pyridoxal 5'-phosphate as cofactor.

Its subcellular location is the cytoplasm. The enzyme catalyses (S)-4-amino-5-oxopentanoate = 5-aminolevulinate. The protein operates within porphyrin-containing compound metabolism; protoporphyrin-IX biosynthesis; 5-aminolevulinate from L-glutamyl-tRNA(Glu): step 2/2. This is Glutamate-1-semialdehyde 2,1-aminomutase from Gemmatimonas aurantiaca (strain DSM 14586 / JCM 11422 / NBRC 100505 / T-27).